The primary structure comprises 88 residues: Meiosis-expressed gene 1 protein (88 aa).

Belongs to the MEIG1 family. Interacts with PACRG. Interacts with MORN3. In terms of tissue distribution, expressed in the testes (at protein level). Expressed in the ovary. Several isoforms have been identified differing in their 5'-untranslated exons. These isoforms show different tissue expression. Some are expressed in various tissues, including lung, liver, brain, testis, oviduct and oocytes. Some are testis-specific.

Essential for spermiogenesis. The chain is Meiosis-expressed gene 1 protein from Mus musculus (Mouse).